Here is a 381-residue protein sequence, read N- to C-terminus: MSGVAGHAEVVGGGIGGLSAAIALGKRGWTVRLHERNDEIRASGSGIYLWDNGLAALDYLGALDSTLVGAHFGARMQTRDAHNALVASSEVNRAGGPRVVTVARERLINALLASADAVGVEVVTGSTVTRVDAAGRIEFDNGHADADLIVVADGIGSRSRDQLGVKTRRRQLNQKCARVLLPREPGMVPSEWVDEYVTFYSGQRFLLYTPCSADLLYLALVCPSDDAPATGDPLPREAWIASFPQLAPLIDRIGPTPRWDEFEMLTLDSWSSGRVAILGDAAHAQPPSLGQGGGCAMLSALGLAHSLSKNYDLTTALGEWESSERSVIQRTQWFSYWLARANKLPDRPRSLLLSAAGHSSLYRNNRMRAALTTPTGITSSK.

The protein belongs to the 3-hydroxybenzoate 6-hydroxylase family.

It carries out the reaction 2-heptyl-4(1H)-quinolone + NADH + O2 + H(+) = 2-heptyl-3-hydroxy-4(1H)-quinolone + NAD(+) + H2O. In terms of biological role, could be involved in the degradation of the Pseudomonas aeruginosa quorum sensing signal molecule HHQ (2-heptyl-4-quinolone) to anthranilic acid. May catalyze the hydroxylation of HHQ to PQS (2-heptyl-3-hydroxy-4-quinolone). This Rhodococcus erythropolis (Arthrobacter picolinophilus) protein is Putative 2-heptyl-3-hydroxy-4(1H)-quinolone synthase AqdB1.